A 122-amino-acid chain; its full sequence is HetP-like commitment protein Alr3234 (122 aa).

This sequence belongs to the HetP family. In terms of assembly, in bacterial two-hybrid assays interacts robustly with itself, Asl1930, Alr2902 and HetR and weakly with HetP.

In terms of biological role, delays heterocyst differentiation and commitment when nitrogen is limiting. Interplay between the 4 HetP paralogs controls the timing of commitment to heterocyst formation and its duration. Epistatic analysis show that the 3 paralogs act upstream of hetP to delay commitment (asl1930, alr3234) or inhibit development (alr2902). Asl1930 and Alr3234 must also attenuate the activity of Alr2902. Ectopic expression does not complement a hetP deletion. This Nostoc sp. (strain PCC 7120 / SAG 25.82 / UTEX 2576) protein is HetP-like commitment protein Alr3234.